The chain runs to 707 residues: Ribosome biogenesis protein ENP2 (707 aa).

WD repeat units follow at residues 54-94, 178-217, 226-265, 269-310, and 312-351; these read EFSE…LKFD, LDTE…RVSK, NRPF…PSII, GYGF…AYAS, and EPSV…PSPR. The segment at 523-707 is disordered; that stretch reads LTAAEESDEE…RASKNAFRGM (185 aa). S529 is modified (phosphoserine). The span at 532-544 shows a compositional bias: basic and acidic residues; sequence ERIAMKDGRGHYD. The segment covering 545–558 has biased composition (acidic residues); sequence YEDEESDEEESDDE. Phosphoserine is present on residues S550 and S555. Basic and acidic residues-rich tracts occupy residues 559 to 598, 629 to 647, 659 to 671, and 680 to 697; these read TNQK…RFMN, ENGK…RGEA, KDGN…HDNS, and NGNK…ENRR.

The protein belongs to the WD repeat NOL10/ENP2 family. As to quaternary structure, component of the 90S pre-ribosomes.

Its subcellular location is the nucleus. It is found in the nucleolus. Its function is as follows. May be involved in rRNA-processing and ribosome biosynthesis. This chain is Ribosome biogenesis protein ENP2 (ENP2), found in Saccharomyces cerevisiae (strain ATCC 204508 / S288c) (Baker's yeast).